A 195-amino-acid chain; its full sequence is Imidazoleglycerol-phosphate dehydratase (195 aa).

It belongs to the imidazoleglycerol-phosphate dehydratase family.

Its subcellular location is the cytoplasm. It carries out the reaction D-erythro-1-(imidazol-4-yl)glycerol 3-phosphate = 3-(imidazol-4-yl)-2-oxopropyl phosphate + H2O. Its pathway is amino-acid biosynthesis; L-histidine biosynthesis; L-histidine from 5-phospho-alpha-D-ribose 1-diphosphate: step 6/9. The protein is Imidazoleglycerol-phosphate dehydratase of Leuconostoc mesenteroides subsp. mesenteroides (strain ATCC 8293 / DSM 20343 / BCRC 11652 / CCM 1803 / JCM 6124 / NCDO 523 / NBRC 100496 / NCIMB 8023 / NCTC 12954 / NRRL B-1118 / 37Y).